We begin with the raw amino-acid sequence, 550 residues long: MTPADLAELLRGTAAKVLAERGLDVSVLPETLTVERPRNPEHGDYATNVAMQVAKKVGTNPRELAGWLADALTAAEGIDSADIAGPGFLNIRLAADAQGAIVAKILEAGAAFGAGHTLDGKKINLEFVSANPTGPIHLGGTRWAAVGDALGRILSTQGAAVTREYYFNDHGAQIDRFSRSLIAAAKGEPAPEDGYAGAYIADIAAQVQQQRPDVLDLPAGEQQEVFRSIGVDLMFAHIKRTLHEFGVDFDVYFHENSLFESGAVEKAVETLKDSGNLFQEDGAWWLKSTDFGDDKDRVVIKSDGNAAYIAGDIAYFQDKRSRGFDLCIYMLGADHHGYIGRLKAAAAAFGDDPDTVEVLIGQMVNLVRDGVAVKMSKRAGTVITLDDLVEAIGVDASRYAMIRSSVDSSIDIDLELWTSTGNENPVYYVQYAHARLSAIARNAADLGIAVTDPDFSLLIAEQEGDLIRTLGEYPRVVTSAANLREPHRIARYLEELAGAYHRFYGACRILPQGDEEVGPLHIARLALCDASRQVLANGLALLGVSAPEQM.

The 'HIGH' region motif lies at 130 to 140 (ANPTGPIHLGG).

It belongs to the class-I aminoacyl-tRNA synthetase family. Monomer.

It is found in the cytoplasm. The enzyme catalyses tRNA(Arg) + L-arginine + ATP = L-arginyl-tRNA(Arg) + AMP + diphosphate. This Rhodococcus opacus (strain B4) protein is Arginine--tRNA ligase.